The following is a 118-amino-acid chain: Ribonuclease P protein component (118 aa).

This sequence belongs to the RnpA family. In terms of assembly, consists of a catalytic RNA component (M1 or rnpB) and a protein subunit.

It carries out the reaction Endonucleolytic cleavage of RNA, removing 5'-extranucleotides from tRNA precursor.. RNaseP catalyzes the removal of the 5'-leader sequence from pre-tRNA to produce the mature 5'-terminus. It can also cleave other RNA substrates such as 4.5S RNA. The protein component plays an auxiliary but essential role in vivo by binding to the 5'-leader sequence and broadening the substrate specificity of the ribozyme. The chain is Ribonuclease P protein component from Mycoplasma pneumoniae (strain ATCC 29342 / M129 / Subtype 1) (Mycoplasmoides pneumoniae).